Consider the following 357-residue polypeptide: MCRFLIFKGKQPIRLSHLLTRPAHSIINQSFDSRLRLDRRRPMNGDGFGVAYYPLDTELSEDGPCLFKAITPAWNNQNLSTLAEKTKSDLVFAHVRASTYGVLSETNCHPFTYHSLCFMHNGGISNFKGIKRKLLNHIKDEYLNFIQGSTDSECAFALFLDTLDKLGYDPKKQDGDFGNVALRKAMLRTIDYIRDWTKEANKDEAHVEPSLLNFAVTDGSTVVVSRYITSKTDEAASLHFSCGSSFVETSPGEYRVERLDRNQDVIMVASEPLTFERGDWTAVPTNSILTIKKQTILLHPIIDEYYQEDPLYLRSSTLAESKGLMGSIPLAKAVEKNVPPLEREGRTRPPTAVAHIA.

Cys2 functions as the For GATase activity in the catalytic mechanism. Positions 2 to 260 (CRFLIFKGKQ…PGEYRVERLD (259 aa)) constitute a Glutamine amidotransferase type-2 domain.

It belongs to the DUG3 family. In terms of assembly, component of the GSH degradosomal complex composed of at least DUG1, DUG2 and DUG3.

It is found in the cytoplasm. Its function is as follows. Component of the GSH degradosomal complex involved in the degradation of glutathione (GSH) and other peptides containing a gamma-glu-X bond. The sequence is that of Probable glutamine amidotransferase DUG3 (DUG3) from Saccharomyces cerevisiae (strain ATCC 204508 / S288c) (Baker's yeast).